Reading from the N-terminus, the 936-residue chain is Translation initiation factor IF-2 (936 aa).

The segment at 102–332 is disordered; that stretch reads PEPGPVLKKD…SGSRQKFRKM (231 aa). Positions 108-119 are enriched in basic and acidic residues; that stretch reads LKKDHVHEEPEK. Over residues 127-137 the composition is skewed to acidic residues; it reads SEPEVEPEVEP. Residues 151–160 are compositionally biased toward low complexity; the sequence is PTEAVSVPEP. Polar residues predominate over residues 182 to 194; it reads QSSTMKAQASPEM. 2 stretches are compositionally biased toward basic and acidic residues: residues 217–227 and 237–267; these read SALDRGSESDR and KEQA…EAKT. The segment covering 272–281 has biased composition (low complexity); it reads KAAGTTGSAA. The span at 287–297 shows a compositional bias: basic residues; it reads SKKKKGGKKKK. In terms of domain architecture, tr-type G spans 433–603; the sequence is IRPPVVTIMG…LMEAEIRELK (171 aa). Residues 442–449 are G1; it reads GHVDHGKT. A GTP-binding site is contributed by 442-449; it reads GHVDHGKT. The G2 stretch occupies residues 467 to 471; sequence GITQH. The tract at residues 489–492 is G3; sequence DTPG. GTP is bound by residues 489-493 and 543-546; these read DTPGH and NKID. Residues 543–546 are G4; sequence NKID. The G5 stretch occupies residues 579 to 581; the sequence is SAK.

It belongs to the TRAFAC class translation factor GTPase superfamily. Classic translation factor GTPase family. IF-2 subfamily.

Its subcellular location is the cytoplasm. Functionally, one of the essential components for the initiation of protein synthesis. Protects formylmethionyl-tRNA from spontaneous hydrolysis and promotes its binding to the 30S ribosomal subunits. Also involved in the hydrolysis of GTP during the formation of the 70S ribosomal complex. This Prosthecochloris aestuarii (strain DSM 271 / SK 413) protein is Translation initiation factor IF-2.